The sequence spans 215 residues: Late embryogenesis abundant protein 14 (215 aa).

Disordered regions lie at residues 1–129 (MASQ…GQTG) and 190–215 (SGDN…SDYQ). 4 stretches are compositionally biased toward basic and acidic residues: residues 13–24 (GETKARAEEKTG), 32–41 (EKAREAKDTA), 54–81 (GAKE…KDAA), and 88–111 (AMDK…DRAA). Residues 192–215 (DNKNNAAAGKDTSTYKPGTGSDYQ) show a composition bias toward polar residues.

This sequence belongs to the LEA type 4 family. As to expression, expressed in the shoot apex and leaves. Expressed in dry seeds. Expressed in roots and leaves.

The protein localises to the nucleus. This is Late embryogenesis abundant protein 14 from Oryza sativa subsp. japonica (Rice).